We begin with the raw amino-acid sequence, 396 residues long: 1-deoxy-D-xylulose 5-phosphate reductoisomerase (396 aa).

NADPH is bound by residues T10, G11, S12, I13, N38, and N123. A 1-deoxy-D-xylulose 5-phosphate-binding site is contributed by K124. E125 contributes to the NADPH binding site. Position 149 (D149) interacts with Mn(2+). 1-deoxy-D-xylulose 5-phosphate-binding residues include S150, E151, S185, and H208. Residue E151 coordinates Mn(2+). G214 provides a ligand contact to NADPH. 1-deoxy-D-xylulose 5-phosphate is bound by residues S221, N226, K227, and E230. E230 contacts Mn(2+).

It belongs to the DXR family. Mg(2+) is required as a cofactor. The cofactor is Mn(2+).

It catalyses the reaction 2-C-methyl-D-erythritol 4-phosphate + NADP(+) = 1-deoxy-D-xylulose 5-phosphate + NADPH + H(+). The protein operates within isoprenoid biosynthesis; isopentenyl diphosphate biosynthesis via DXP pathway; isopentenyl diphosphate from 1-deoxy-D-xylulose 5-phosphate: step 1/6. Catalyzes the NADPH-dependent rearrangement and reduction of 1-deoxy-D-xylulose-5-phosphate (DXP) to 2-C-methyl-D-erythritol 4-phosphate (MEP). This Shewanella halifaxensis (strain HAW-EB4) protein is 1-deoxy-D-xylulose 5-phosphate reductoisomerase.